A 564-amino-acid polypeptide reads, in one-letter code: Sulfite reductase [NADPH] hemoprotein beta-component 1 (564 aa).

Residues Cys426, Cys432, Cys471, and Cys475 each contribute to the [4Fe-4S] cluster site. Cys475 lines the siroheme pocket.

Belongs to the nitrite and sulfite reductase 4Fe-4S domain family. Alpha(8)-beta(8). The alpha component is a flavoprotein, the beta component is a hemoprotein. It depends on siroheme as a cofactor. Requires [4Fe-4S] cluster as cofactor.

It catalyses the reaction hydrogen sulfide + 3 NADP(+) + 3 H2O = sulfite + 3 NADPH + 4 H(+). Its pathway is sulfur metabolism; hydrogen sulfide biosynthesis; hydrogen sulfide from sulfite (NADPH route): step 1/1. Functionally, component of the sulfite reductase complex that catalyzes the 6-electron reduction of sulfite to sulfide. This is one of several activities required for the biosynthesis of L-cysteine from sulfate. This Pectobacterium carotovorum subsp. carotovorum (strain PC1) protein is Sulfite reductase [NADPH] hemoprotein beta-component 1.